Here is a 96-residue protein sequence, read N- to C-terminus: Large ribosomal subunit protein uL23 (96 aa).

The protein belongs to the universal ribosomal protein uL23 family. As to quaternary structure, part of the 50S ribosomal subunit. Contacts protein L29, and trigger factor when it is bound to the ribosome.

In terms of biological role, one of the early assembly proteins it binds 23S rRNA. One of the proteins that surrounds the polypeptide exit tunnel on the outside of the ribosome. Forms the main docking site for trigger factor binding to the ribosome. This Clostridioides difficile (strain 630) (Peptoclostridium difficile) protein is Large ribosomal subunit protein uL23.